The primary structure comprises 250 residues: uncharacterized protein (250 aa).

4Fe-4S ferredoxin-type domains follow at residues 38-67 (KLLY…KAKV), 69-98 (KSAK…VIEG), 124-153 (KKYE…AVRR), 154-183 (KSIE…VERE), 191-220 (RDIE…QDGD), and 220-249 (DKVK…MWEK). C47, C50, C53, C57, C78, C81, C84, C88, C133, C136, C139, C143, C163, C166, C169, C173, C200, C203, C206, C210, C229, C232, C235, and C239 together coordinate [4Fe-4S] cluster.

This is an uncharacterized protein from Methanocaldococcus jannaschii (strain ATCC 43067 / DSM 2661 / JAL-1 / JCM 10045 / NBRC 100440) (Methanococcus jannaschii).